A 370-amino-acid chain; its full sequence is tRNA N6-adenosine threonylcarbamoyltransferase (370 aa).

Histidine 122 and histidine 126 together coordinate Fe cation. Residues 153–157 (LLSGG), aspartate 186, glycine 199, and asparagine 298 contribute to the substrate site. Aspartate 326 is a binding site for Fe cation.

This sequence belongs to the KAE1 / TsaD family. Fe(2+) is required as a cofactor.

Its subcellular location is the cytoplasm. It carries out the reaction L-threonylcarbamoyladenylate + adenosine(37) in tRNA = N(6)-L-threonylcarbamoyladenosine(37) in tRNA + AMP + H(+). Its function is as follows. Required for the formation of a threonylcarbamoyl group on adenosine at position 37 (t(6)A37) in tRNAs that read codons beginning with adenine. Is involved in the transfer of the threonylcarbamoyl moiety of threonylcarbamoyl-AMP (TC-AMP) to the N6 group of A37, together with TsaE and TsaB. TsaD likely plays a direct catalytic role in this reaction. The polypeptide is tRNA N6-adenosine threonylcarbamoyltransferase (Granulibacter bethesdensis (strain ATCC BAA-1260 / CGDNIH1)).